A 234-amino-acid polypeptide reads, in one-letter code: Purine nucleoside phosphorylase DeoD-type (234 aa).

His-4 provides a ligand contact to a purine D-ribonucleoside. Phosphate contacts are provided by residues Gly-20, Arg-24, Arg-43, and 87-90 (RVGT). A purine D-ribonucleoside-binding positions include Glu-162, 178–180 (EME), and 202–203 (SD). The active-site Proton donor is the Asp-203.

Belongs to the PNP/UDP phosphorylase family. In terms of assembly, homohexamer; trimer of homodimers.

It catalyses the reaction a purine D-ribonucleoside + phosphate = a purine nucleobase + alpha-D-ribose 1-phosphate. It carries out the reaction a purine 2'-deoxy-D-ribonucleoside + phosphate = a purine nucleobase + 2-deoxy-alpha-D-ribose 1-phosphate. In terms of biological role, catalyzes the reversible phosphorolytic breakdown of the N-glycosidic bond in the beta-(deoxy)ribonucleoside molecules, with the formation of the corresponding free purine bases and pentose-1-phosphate. The sequence is that of Purine nucleoside phosphorylase DeoD-type from Anoxybacillus flavithermus (strain DSM 21510 / WK1).